A 141-amino-acid chain; its full sequence is Hemoglobin subunit alpha (141 aa).

In terms of domain architecture, Globin spans 1 to 141 (VLSSADKANI…VSTVLTSKYR (141 aa)). Ser3 carries the phosphoserine modification. N6-succinyllysine occurs at positions 7 and 11. Lys16 carries the N6-acetyllysine; alternate modification. Lys16 carries the post-translational modification N6-succinyllysine; alternate. Tyr24 is modified (phosphotyrosine). Lys40 carries the post-translational modification N6-succinyllysine. Ser49 carries the phosphoserine modification. Residue His58 participates in O2 binding. His87 is a binding site for heme b. Ser102 is modified (phosphoserine). Position 108 is a phosphothreonine (Thr108). Ser131 is subject to Phosphoserine. Residues Thr134 and Thr137 each carry the phosphothreonine modification. Position 138 is a phosphoserine (Ser138).

It belongs to the globin family. Heterotetramer of two alpha chains and two beta chains. In terms of tissue distribution, red blood cells.

Functionally, involved in oxygen transport from the lung to the various peripheral tissues. In terms of biological role, hemopressin acts as an antagonist peptide of the cannabinoid receptor CNR1. Hemopressin-binding efficiently blocks cannabinoid receptor CNR1 and subsequent signaling. This Crocuta crocuta (Spotted hyena) protein is Hemoglobin subunit alpha (HBA).